The chain runs to 138 residues: Small ribosomal subunit protein uS12 (138 aa).

Positions 1–22 (MPTINQLVRQGRKSISTKSDSP) are enriched in polar residues. The interval 1 to 45 (MPTINQLVRQGRKSISTKSDSPALNFGYNSKKKSLTNNPAPQKRG) is disordered. Residue aspartate 102 is modified to 3-methylthioaspartic acid.

Belongs to the universal ribosomal protein uS12 family. As to quaternary structure, part of the 30S ribosomal subunit. Contacts proteins S8 and S17. May interact with IF1 in the 30S initiation complex.

Its function is as follows. With S4 and S5 plays an important role in translational accuracy. In terms of biological role, interacts with and stabilizes bases of the 16S rRNA that are involved in tRNA selection in the A site and with the mRNA backbone. Located at the interface of the 30S and 50S subunits, it traverses the body of the 30S subunit contacting proteins on the other side and probably holding the rRNA structure together. The combined cluster of proteins S8, S12 and S17 appears to hold together the shoulder and platform of the 30S subunit. This chain is Small ribosomal subunit protein uS12, found in Lacticaseibacillus paracasei (strain ATCC 334 / BCRC 17002 / CCUG 31169 / CIP 107868 / KCTC 3260 / NRRL B-441) (Lactobacillus paracasei).